The following is a 36-amino-acid chain: Dermonecrotic toxin LgSicTox-beta-LOXN2 (36 aa).

It belongs to the arthropod phospholipase D family. Class II subfamily. It depends on Mg(2+) as a cofactor. Contains 2 disulfide bonds. As to expression, expressed by the venom gland.

It is found in the secreted. It carries out the reaction an N-(acyl)-sphingosylphosphocholine = an N-(acyl)-sphingosyl-1,3-cyclic phosphate + choline. The catalysed reaction is an N-(acyl)-sphingosylphosphoethanolamine = an N-(acyl)-sphingosyl-1,3-cyclic phosphate + ethanolamine. It catalyses the reaction a 1-acyl-sn-glycero-3-phosphocholine = a 1-acyl-sn-glycero-2,3-cyclic phosphate + choline. The enzyme catalyses a 1-acyl-sn-glycero-3-phosphoethanolamine = a 1-acyl-sn-glycero-2,3-cyclic phosphate + ethanolamine. Its function is as follows. Dermonecrotic toxins cleave the phosphodiester linkage between the phosphate and headgroup of certain phospholipids (sphingolipid and lysolipid substrates), forming an alcohol (often choline) and a cyclic phosphate. This toxin acts on sphingomyelin (SM). It may also act on ceramide phosphoethanolamine (CPE), lysophosphatidylcholine (LPC) and lysophosphatidylethanolamine (LPE), but not on lysophosphatidylserine (LPS), and lysophosphatidylglycerol (LPG). It acts by transphosphatidylation, releasing exclusively cyclic phosphate products as second products. Induces dermonecrosis, hemolysis, increased vascular permeability, edema, inflammatory response, and platelet aggregation. The sequence is that of Dermonecrotic toxin LgSicTox-beta-LOXN2 from Loxosceles gaucho (Spider).